We begin with the raw amino-acid sequence, 452 residues long: MQRRIMGIETEFGVTCTFHGHRRLSPDEVARYLFRRVVSWGRSSNVFLRNGARLYLDVGSHPEYATAECDNLVQLVTHDRAGEWVLEDLLVDAEQRLADEGIGGDIYLFKNNTDSAGNSYGCHENYLIVRAGEFSRISDVLLPFLVTRQLICGAGKVLQTPKAATFCLSQRAEHIWEGVSSATTRSRPIINTRDEPHADAEKYRRLHVIVGDSNMCETTTMLKVGTAALVLEMIEAGVPFRDFSLDNPIRAIREVSHDITGRRPVRLAGGRQASALDIQREYYSRAVEHLQTREPNAQIEQIVDLWGRQLDAVESQDFAKVDTEIDWVIKRKLFQRYQDRYNMELSDPKIAQLDLAYHDIKRGRGVFDLLQRKGLAARVTTDEDIAEAVDTPPQTTRARLRGEFISAAQAAGRDFTVDWVHLKLNDQAQRTVLCKDPFRAVDERVKRLIASM.

Mg(2+) is bound at residue Glu-9. An ATP-binding site is contributed by Arg-53. Tyr-55 serves as a coordination point for Mg(2+). Residue Asp-57 is the Proton acceptor of the active site. Glu-63 is a Mg(2+) binding site. Thr-66 and Trp-419 together coordinate ATP.

The protein belongs to the Pup ligase/Pup deamidase family. Pup-conjugating enzyme subfamily.

The enzyme catalyses ATP + [prokaryotic ubiquitin-like protein]-L-glutamate + [protein]-L-lysine = ADP + phosphate + N(6)-([prokaryotic ubiquitin-like protein]-gamma-L-glutamyl)-[protein]-L-lysine.. It functions in the pathway protein degradation; proteasomal Pup-dependent pathway. The protein operates within protein modification; protein pupylation. Catalyzes the covalent attachment of the prokaryotic ubiquitin-like protein modifier Pup to the proteasomal substrate proteins, thereby targeting them for proteasomal degradation. This tagging system is termed pupylation. The ligation reaction involves the side-chain carboxylate of the C-terminal glutamate of Pup and the side-chain amino group of a substrate lysine. This is Pup--protein ligase from Mycobacterium avium (strain 104).